A 438-amino-acid chain; its full sequence is Protein pop-1 (438 aa).

The interval Met-1–Lys-39 is disordered. The interval Met-1 to Glu-45 is sufficient for interaction with beta-catenin/sys-1. The span at Asp-9–Glu-18 shows a compositional bias: basic and acidic residues. Residues Ala-88–Tyr-130 form an involved in nuclear asymmetry region. Phosphoserine; by LIT1 occurs at positions 118 and 127. Positions Val-192–Ser-262 form a DNA-binding region, HMG box. Positions Asp-250–Ala-263 are enriched in basic and acidic residues. Disordered stretches follow at residues Asp-250–Asp-288, Thr-318–Asn-351, and Thr-378–Ile-438. Basic residues predominate over residues Asn-270–Asp-279. Polar residues-rich tracts occupy residues Ser-324–Tyr-339 and Thr-378–Gly-395. Over residues Ser-406 to Ile-418 the composition is skewed to acidic residues.

Belongs to the TCF/LEF family. As to quaternary structure, interacts (via N-terminal region) with beta-catenin homolog sys-1. Interacts with hda-1. Interacts with bar-1. Interacts with par-5; the interaction is direct and is enhanced by lit-1-mediated pop-1 phosphorylation. The interaction also leads to the subsequent nuclear export of pop-1. Interacts (when phosphorylated on Ser-118 and Ser-127) with lit-1; the interaction is dependent on the beta-catenin-lit-1 complex. Interacts with wrm-1. Interacts with homeobox protein egl-5. Interacts with zinc finger transcription factor ref-2; the interaction is direct and facilitates transcriptional activation; transcription may be repressed by beta-catenin/sys-1. Phosphorylated on Ser-118 and Ser-127 by lit-1 in the beta-catenin-lit-1 complex. Phosphorylation promotes the interaction of pop-1 and par-5 and the subsequent translocation of pop-1 from the nucleus to the cytoplasm.

The protein resides in the nucleus. The protein localises to the cytoplasm. Transcription factor. Part of the Wnt signaling asymmetry pathway. Binds to the consensus sequence, 5'-(C/T)TTTG(A/T)(A/T)(G/C)-3'. Activates or represses target gene expression, depending on upstream Wnt signals and interactions with transcription co-regulators, such as beta-catenin/sys-1 or zinc finger transcription factor ref-2. Essential for the specification of the mesodermal and endodermal cell fates in early embryos. Required in many asymmetrical cell divisions in the early embryo and during larval development. Reciprocal distribution patterns of sys-1 and pop-1 in the daughters of anterior-posterior cell divisions functions in specifying cell fate; a higher sys-1 to pop-1 ratio promotes the posterior cell fate, whereas a low sys-1 to pop-1 ratio promotes the anterior fate. Involved in modulating nuclear localization or nuclear retention of sys-1. Involved in the terminal asymmetrical division of many embryonic neuroblasts; for example in the SMDD/AIY neuron lineage. In complex with ref-2, positively modulates expression of LIM/homeobox protein ttx-3 in anterior daughter cells of the SMDD/AIY lineage. Required for asymmetrical division of somatic gonadal precursor descendants which initiate axis formation required to control organ shape. Similarly, involved in asymmetrical division of seam cells, a stem cell-like lineage. Represses expression of target genes via its interaction with hda-1 histone deacetylase. Required for specification of the M lineage-derived coelomocyte and sex myoblast fate. Regulates coelomocyte fate by positively regulating proliferation and ceh-34 and possibly eya-1 expression in M.dlpa and M.drpa precursors. The protein is Protein pop-1 of Caenorhabditis elegans.